We begin with the raw amino-acid sequence, 355 residues long: MTGPHNDTESPHARPISVAELLARNGTIGAPAVSRRRRRRTDSDAVTVAELTCDIPIIHDDHADEQHLAATHAHRANIGVRVVEPAAQSPLEPVCEGIVAEPPVDDHGHVPPGCWSAPEPRWPKSPPLTHLRTGLQRSACSRPLPHLGDVRHPVAPDSIAQKQSDAEGMSPDPVEPFADIPVDVMGSEVRAAELVAEESAYARYNLQMSAGALFSGHTLTNELAERRGDEHAAGGLLAVGIDLDEDHLDLHTDLAGITSPARGWQSRFEALWRGSLIVLQSILAVVFGAGLFVAFDQLWRWNSIVALVLSVLVILGLVVGVRVVRRTEDIASTLIAVVVGALITLGPLALSLQSG.

Helical transmembrane passes span 275 to 295 (SLIVLQSILAVVFGAGLFVAF), 301 to 321 (WNSIVALVLSVLVILGLVVGV), and 330 to 350 (IASTLIAVVVGALITLGPLAL).

It to M.tuberculosis Rv0497.

The protein resides in the cell membrane. This is an uncharacterized protein from Mycobacterium leprae (strain TN).